The following is a 415-amino-acid chain: ATP-dependent RNA helicase RhlB (415 aa).

Positions Lys-9 to Ala-37 match the Q motif motif. Positions Leu-40 to Val-219 constitute a Helicase ATP-binding domain. Residue Ala-53–Thr-60 participates in ATP binding. Residues Asp-165–Asp-168 carry the DEAD box motif. The 146-residue stretch at Arg-245–Leu-390 folds into the Helicase C-terminal domain. A disordered region spans residues Pro-396–Gly-415. Basic residues predominate over residues Arg-398–Gly-415.

Belongs to the DEAD box helicase family. RhlB subfamily. Component of the RNA degradosome, which is a multiprotein complex involved in RNA processing and mRNA degradation.

The protein localises to the cytoplasm. It carries out the reaction ATP + H2O = ADP + phosphate + H(+). Functionally, DEAD-box RNA helicase involved in RNA degradation. Has RNA-dependent ATPase activity and unwinds double-stranded RNA. This chain is ATP-dependent RNA helicase RhlB, found in Sodalis glossinidius (strain morsitans).